Consider the following 214-residue polypeptide: Pyrrolidone-carboxylate peptidase 2 (214 aa).

Residues Glu78, Cys141, and His165 contribute to the active site.

Belongs to the peptidase C15 family. Homotetramer.

It is found in the cytoplasm. The catalysed reaction is Release of an N-terminal pyroglutamyl group from a polypeptide, the second amino acid generally not being Pro.. Its function is as follows. Removes 5-oxoproline from various penultimate amino acid residues except L-proline. This chain is Pyrrolidone-carboxylate peptidase 2, found in Streptococcus pneumoniae serotype 4 (strain ATCC BAA-334 / TIGR4).